Here is a 594-residue protein sequence, read N- to C-terminus: Dictomallein-4 (594 aa).

An N-terminal signal peptide occupies residues 1-18; sequence MKLVLIFLIINFLLIINC. Residues 147 to 408 enclose the Peptidase M66 domain; sequence PDVSQDYTLK…QNYFKNSIYY (262 aa). His-300 is a binding site for Zn(2+). The active site involves Glu-301. Residues His-304 and His-310 each contribute to the Zn(2+) site.

It belongs to the dictomallein family. The cofactor is Zn(2+).

The protein localises to the secreted. This Dictyostelium discoideum (Social amoeba) protein is Dictomallein-4 (dtmlD).